A 599-amino-acid polypeptide reads, in one-letter code: mRNA export factor MEX67 (599 aa).

Serine 2 carries the N-acetylserine modification. LRR repeat units follow at residues isoleucine 163–alanine 184 and asparagine 189–lysine 210. One can recognise an LRRCT domain in the interval asparagine 224 to serine 262. An NTF2 domain is found at serine 280 to valine 467. The tract at residues lysine 408–lysine 439 is disordered. The region spanning proline 546–phenylalanine 599 is the TAP-C domain.

It belongs to the NXF family. Interacts with nucleoporin complex NUP84 and MTR2. Interacts with MIP6.

The protein localises to the nucleus. Its subcellular location is the cytoplasm. Its function is as follows. Involved in the export of mRNA from the nucleus to the cytoplasm. In Saccharomyces cerevisiae (strain ATCC 204508 / S288c) (Baker's yeast), this protein is mRNA export factor MEX67 (MEX67).